Reading from the N-terminus, the 205-residue chain is Recombination protein RecR (205 aa).

A C4-type zinc finger spans residues 58 to 75 (CSLCQNVTDKEIDPCNIC). A Toprim domain is found at 83–182 (RVVCVVEAPN…KVTRIARGIP (100 aa)).

Belongs to the RecR family.

Its function is as follows. May play a role in DNA repair. It seems to be involved in an RecBC-independent recombinational process of DNA repair. It may act with RecF and RecO. The polypeptide is Recombination protein RecR (Chloroherpeton thalassium (strain ATCC 35110 / GB-78)).